A 67-amino-acid chain; its full sequence is MLYPSVDKLQKTVPSKYTIVTVAAKRARQIQDGKRVKVANPKSYKPVGKALEELFSGEVVVTNQPQD.

This sequence belongs to the RNA polymerase subunit omega family. In terms of assembly, the RNAP catalytic core consists of 2 alpha, 1 beta, 1 beta' and 1 omega subunit. When a sigma factor is associated with the core the holoenzyme is formed, which can initiate transcription.

It catalyses the reaction RNA(n) + a ribonucleoside 5'-triphosphate = RNA(n+1) + diphosphate. Functionally, promotes RNA polymerase assembly. Latches the N- and C-terminal regions of the beta' subunit thereby facilitating its interaction with the beta and alpha subunits. The protein is DNA-directed RNA polymerase subunit omega of Exiguobacterium sibiricum (strain DSM 17290 / CCUG 55495 / CIP 109462 / JCM 13490 / 255-15).